Reading from the N-terminus, the 236-residue chain is CD81 antigen (236 aa).

Residues 1–12 lie on the Cytoplasmic side of the membrane; sequence MGVEGCTKCIKY. Residues 13–33 form a helical membrane-spanning segment; it reads LLFVFNFVFWLAGGVILGVAL. Topologically, residues 34 to 63 are extracellular; sequence WLRHDPQTTNLLYLELGDKPAPNTFYVGIY. The helical transmembrane segment at 64–84 threads the bilayer; it reads ILIAVGAVMMFVGFLGCYGAI. At 85-89 the chain is on the cytoplasmic side; sequence QESQC. A helical membrane pass occupies residues 90 to 112; the sequence is LLGTFFTCLVILFACEVAAGIWG. The Extracellular segment spans residues 113–201; it reads FVNKDQIAKD…QKIDELFSGK (89 aa). 2 disulfides stabilise this stretch: Cys-156–Cys-190 and Cys-157–Cys-175. Residues 202–224 traverse the membrane as a helical segment; the sequence is LYLIGIAAIVVAVIMIFEMILSM. Glu-219 lines the cholesterol pocket. Topologically, residues 225–236 are cytoplasmic; it reads VLCCGIRNSSVY.

This sequence belongs to the tetraspanin (TM4SF) family. Homodimer. Part of a complex composed of CD19, CR2/CD21, CD81 and IFITM1/CD225 in the membrane of mature B cells. Interacts (via the second extracellular domain) with CD19; this interaction is initiated early during biosynthesis in the ER and enables trafficking of only properly folded CD19. Part of a complex that includes MHC class II/HLA-DR molecules and IFITM1. Interacts with IFITM1. Interacts with IFITM2 and IFITM3. Part of integrin-tetraspanin complex composed of CD9, CD81, beta-1 and beta-2 integrins in the membrane of monocyte/macrophages. Interacts (via the second extracellular domain) with integrin ITGAV:ITGB3. Interacts with CD247/CD3 zeta, ICAM1 and CD9 at the immune synapse on T cell membrane. Part of a GPCR-tetraspanin complex consisting at least of ADGRG1, CD81, possibly CD9, and GNA11 in which CD81 enhances the association of ADGRG1 with GNA11. Part of a complex composed of CD9, CD81, PTGFRN and IGSF8. Interacts directly with IGSF8. Interacts with CD53 and SCIMP. Interacts with SAMHD1 (via its C-terminus). Interacts with glypican GPC3 and with the transcriptional repressor HHEX; binding to GPC3 decreases the availability of free CD81 for binding to HHEX, resulting in nuclear translocation of HHEX and transcriptional repression. Interacts with CLDN1. Interacts with CLDN6 and CLDN9. Post-translationally, not glycosylated. In terms of processing, likely constitutively palmitoylated at low levels. Protein palmitoylation is up-regulated upon coligation of BCR and CD9-C2R-CD81 complexes in lipid rafts.

It is found in the cell membrane. The protein localises to the basolateral cell membrane. Its function is as follows. Structural component of specialized membrane microdomains known as tetraspanin-enriched microdomains (TERMs), which act as platforms for receptor clustering and signaling. Essential for trafficking and compartmentalization of CD19 receptor on the surface of activated B cells. Upon initial encounter with microbial pathogens, enables the assembly of CD19-CR2/CD21 and B cell receptor (BCR) complexes at signaling TERMs, lowering the threshold dose of antigen required to trigger B cell clonal expansion and antibody production. In T cells, facilitates the localization of CD247/CD3 zeta at antigen-induced synapses with B cells, providing for costimulation and polarization toward T helper type 2 phenotype. Present in MHC class II compartments, may also play a role in antigen presentation. Can act both as positive and negative regulator of homotypic or heterotypic cell-cell fusion processes. Positively regulates sperm-egg fusion and may be involved in acrosome reaction. In myoblasts, associates with CD9 and PTGFRN and inhibits myotube fusion during muscle regeneration. In macrophages, associates with CD9 and beta-1 and beta-2 integrins, and prevents macrophage fusion into multinucleated giant cells specialized in ingesting complement-opsonized large particles. Also prevents the fusion of mononuclear cell progenitors into osteoclasts in charge of bone resorption. May regulate the compartmentalization of enzymatic activities. In T cells, defines the subcellular localization of dNTPase SAMHD1 and permits its degradation by the proteasome, thereby controlling intracellular dNTP levels. Also involved in cell adhesion and motility. Positively regulates integrin-mediated adhesion of macrophages, particularly relevant for the inflammatory response in the lung. This is CD81 antigen (CD81) from Chlorocebus aethiops (Green monkey).